The following is a 414-amino-acid chain: MFDRQNTLAKTDPQLWAAIQNENKRQEDHIELIASENYTSPAVMEAQGSQLTNKYAEGYPGKRYYGGCEFVDVAEQLAIDRVKALFGAEAANVQPHCGASANQAVFLAFLKPGDTFMGMSLAEGGHLTHGMALNMSGKWFNPIAYGLDKNEEIDYEQMERLAREHKPKLIIAGASAYSKKIDFERIGKLAKEVGAIFMVDMAHYAGLVAAGVYPNPVPHADIVTSTTHKSLRGPRGGIILMKAEHEKAINSAVFPGLQGGPLMHVIAGKAAAFKEAAEPGFKDYQKQVVANAKALAETLIARGLRIVSGGTDSHVMLVDLRAKKMTGKEAEHVLGEAHITCNKNGIPNDPEKPMVTSGIRLGSPAMTTRGFKEAEAVQVGNFIADVLDNPNDPENIAKVRAQVAELTKRFPVYG.

(6S)-5,6,7,8-tetrahydrofolate is bound by residues Leu-121 and 125–127 (GHL). N6-(pyridoxal phosphate)lysine is present on Lys-229.

It belongs to the SHMT family. In terms of assembly, homodimer. The cofactor is pyridoxal 5'-phosphate.

It is found in the cytoplasm. It catalyses the reaction (6R)-5,10-methylene-5,6,7,8-tetrahydrofolate + glycine + H2O = (6S)-5,6,7,8-tetrahydrofolate + L-serine. It participates in one-carbon metabolism; tetrahydrofolate interconversion. Its pathway is amino-acid biosynthesis; glycine biosynthesis; glycine from L-serine: step 1/1. Functionally, catalyzes the reversible interconversion of serine and glycine with tetrahydrofolate (THF) serving as the one-carbon carrier. This reaction serves as the major source of one-carbon groups required for the biosynthesis of purines, thymidylate, methionine, and other important biomolecules. Also exhibits THF-independent aldolase activity toward beta-hydroxyamino acids, producing glycine and aldehydes, via a retro-aldol mechanism. In Polynucleobacter asymbioticus (strain DSM 18221 / CIP 109841 / QLW-P1DMWA-1) (Polynucleobacter necessarius subsp. asymbioticus), this protein is Serine hydroxymethyltransferase.